An 860-amino-acid chain; its full sequence is DNA mismatch repair protein MutS (860 aa).

618-625 serves as a coordination point for ATP; that stretch reads GPNMGGKS.

It belongs to the DNA mismatch repair MutS family.

Its function is as follows. This protein is involved in the repair of mismatches in DNA. It is possible that it carries out the mismatch recognition step. This protein has a weak ATPase activity. This is DNA mismatch repair protein MutS from Shewanella piezotolerans (strain WP3 / JCM 13877).